The primary structure comprises 202 residues: Inner membrane-spanning protein YciB (202 aa).

6 helical membrane passes run 3–23 (ILFDLLPVILFFVAYKIAGGN), 46–66 (ILLATAVAILATIAQIGWVWM), 73–93 (TMLWISLAIIAVFGGATLFFH), 100–120 (WKPTALYWLFGGTLTVSAVIF), 145–165 (LAWAGFFILMGFLNLYVAYNF), and 173–193 (FKLFGGMGLMLLFVLGQGFYL).

It belongs to the YciB family.

The protein resides in the cell inner membrane. Its function is as follows. Plays a role in cell envelope biogenesis, maintenance of cell envelope integrity and membrane homeostasis. The sequence is that of Inner membrane-spanning protein YciB from Aromatoleum aromaticum (strain DSM 19018 / LMG 30748 / EbN1) (Azoarcus sp. (strain EbN1)).